The following is a 95-amino-acid chain: Co-chaperonin GroES (95 aa).

It belongs to the GroES chaperonin family. As to quaternary structure, heptamer of 7 subunits arranged in a ring. Interacts with the chaperonin GroEL.

Its subcellular location is the cytoplasm. In terms of biological role, together with the chaperonin GroEL, plays an essential role in assisting protein folding. The GroEL-GroES system forms a nano-cage that allows encapsulation of the non-native substrate proteins and provides a physical environment optimized to promote and accelerate protein folding. GroES binds to the apical surface of the GroEL ring, thereby capping the opening of the GroEL channel. This is Co-chaperonin GroES from Streptococcus mutans serotype c (strain ATCC 700610 / UA159).